Consider the following 430-residue polypeptide: MAKIFTISLGCSKNLTDTEEMLGILNHKKHYLVADESEADTILINTCAFIKPAREEADREIKRASKLKAQGKIEKLIVAGCLTQKEGKSLPSKYPLVDAFIGLKGIEKIDNVIKRPKHSFCPAPDYIKAPDFKLQLTAPHSAYLKVADGCNNRCAYCTIPAIRGPFRSKSMEDIVAEAKAMEKNGVKEISLIAQDTTAYGQDIFGKPSLVKLLKKLVKIKGIEWFRIMYAYPETVTKDLLDFIACEPKICRYLDMPLQHISAPVLKAMNRRSTEDEVRAKIKLIRQIVPGMSLRTNFIAGFPGETAEDFEKLKKFIAEAKFNNVGVFAYSKEDGTPAAVMKRQVAEKIKKQRVEELVSAQSRVIDSINRKLKGKTVKVLLDNLFCGRSESDSPDIDGRVEVKGNKKYKAGDFVKVKITSAKGYNRTGKII.

One can recognise an MTTase N-terminal domain in the interval 2 to 118; sequence AKIFTISLGC…IDNVIKRPKH (117 aa). [4Fe-4S] cluster contacts are provided by Cys11, Cys47, Cys81, Cys150, Cys154, and Cys157. Residues 136–368 form the Radical SAM core domain; it reads LTAPHSAYLK…AQSRVIDSIN (233 aa). One can recognise a TRAM domain in the interval 369–430; that stretch reads RKLKGKTVKV…KGYNRTGKII (62 aa).

The protein belongs to the methylthiotransferase family. RimO subfamily. Requires [4Fe-4S] cluster as cofactor.

It localises to the cytoplasm. It carries out the reaction L-aspartate(89)-[ribosomal protein uS12]-hydrogen + (sulfur carrier)-SH + AH2 + 2 S-adenosyl-L-methionine = 3-methylsulfanyl-L-aspartate(89)-[ribosomal protein uS12]-hydrogen + (sulfur carrier)-H + 5'-deoxyadenosine + L-methionine + A + S-adenosyl-L-homocysteine + 2 H(+). Its function is as follows. Catalyzes the methylthiolation of an aspartic acid residue of ribosomal protein uS12. This is Ribosomal protein uS12 methylthiotransferase RimO from Elusimicrobium minutum (strain Pei191).